A 231-amino-acid polypeptide reads, in one-letter code: Large ribosomal subunit protein uL1 (231 aa).

It belongs to the universal ribosomal protein uL1 family. Part of the 50S ribosomal subunit.

Binds directly to 23S rRNA. The L1 stalk is quite mobile in the ribosome, and is involved in E site tRNA release. Functionally, protein L1 is also a translational repressor protein, it controls the translation of the L11 operon by binding to its mRNA. The polypeptide is Large ribosomal subunit protein uL1 (Buchnera aphidicola subsp. Acyrthosiphon pisum (strain APS) (Acyrthosiphon pisum symbiotic bacterium)).